The following is a 239-amino-acid chain: Pyridoxine 5'-phosphate synthase (239 aa).

Asn7 is a 3-amino-2-oxopropyl phosphate binding site. Residue 9–10 (DH) coordinates 1-deoxy-D-xylulose 5-phosphate. Arg18 contacts 3-amino-2-oxopropyl phosphate. The Proton acceptor role is filled by His43. 1-deoxy-D-xylulose 5-phosphate contacts are provided by Arg45 and His50. Glu70 (proton acceptor) is an active-site residue. Thr100 serves as a coordination point for 1-deoxy-D-xylulose 5-phosphate. His191 acts as the Proton donor in catalysis. Residues Gly192 and 213-214 (GH) contribute to the 3-amino-2-oxopropyl phosphate site.

The protein belongs to the PNP synthase family. In terms of assembly, homooctamer; tetramer of dimers.

The protein resides in the cytoplasm. It carries out the reaction 3-amino-2-oxopropyl phosphate + 1-deoxy-D-xylulose 5-phosphate = pyridoxine 5'-phosphate + phosphate + 2 H2O + H(+). It functions in the pathway cofactor biosynthesis; pyridoxine 5'-phosphate biosynthesis; pyridoxine 5'-phosphate from D-erythrose 4-phosphate: step 5/5. Functionally, catalyzes the complicated ring closure reaction between the two acyclic compounds 1-deoxy-D-xylulose-5-phosphate (DXP) and 3-amino-2-oxopropyl phosphate (1-amino-acetone-3-phosphate or AAP) to form pyridoxine 5'-phosphate (PNP) and inorganic phosphate. The polypeptide is Pyridoxine 5'-phosphate synthase (Trichormus variabilis (strain ATCC 29413 / PCC 7937) (Anabaena variabilis)).